The sequence spans 143 residues: Transcriptional regulator MraZ (143 aa).

SpoVT-AbrB domains follow at residues 5–47 (EYEH…PRSV) and 76–119 (AADM…APRR).

This sequence belongs to the MraZ family. Forms oligomers.

The protein localises to the cytoplasm. The protein resides in the nucleoid. The polypeptide is Transcriptional regulator MraZ (Roseiflexus sp. (strain RS-1)).